We begin with the raw amino-acid sequence, 492 residues long: Trypanothione reductase (492 aa).

35-52 (DVQTHHGPPHYAALGGTC) serves as a coordination point for FAD. C52 and C57 form a disulfide bridge. H461 acts as the Proton acceptor in catalysis.

The protein belongs to the class-I pyridine nucleotide-disulfide oxidoreductase family. Homodimer. Requires FAD as cofactor.

It is found in the cytoplasm. The catalysed reaction is trypanothione + NADP(+) = trypanothione disulfide + NADPH + H(+). Its function is as follows. Trypanothione is the parasite analog of glutathione; this enzyme is the equivalent of glutathione reductase. The polypeptide is Trypanothione reductase (TPR) (Trypanosoma brucei brucei).